The chain runs to 726 residues: Methionine--tRNA ligase (726 aa).

The 'HIGH' region motif lies at P12 to N22. Residues C143, C146, C155, and C158 each contribute to the Zn(2+) site. A 'KMSKS' region motif is present at residues K330–S334. Residue K333 participates in ATP binding. Positions F562–I667 constitute a tRNA-binding domain.

This sequence belongs to the class-I aminoacyl-tRNA synthetase family. MetG type 1 subfamily. Homodimer. Requires Zn(2+) as cofactor.

The protein localises to the cytoplasm. The catalysed reaction is tRNA(Met) + L-methionine + ATP = L-methionyl-tRNA(Met) + AMP + diphosphate. Is required not only for elongation of protein synthesis but also for the initiation of all mRNA translation through initiator tRNA(fMet) aminoacylation. In Borrelia recurrentis (strain A1), this protein is Methionine--tRNA ligase.